A 122-amino-acid chain; its full sequence is Holo-[acyl-carrier-protein] synthase (122 aa).

Residues Asp8 and Glu52 each contribute to the Mg(2+) site.

The protein belongs to the P-Pant transferase superfamily. AcpS family. It depends on Mg(2+) as a cofactor.

It is found in the cytoplasm. The catalysed reaction is apo-[ACP] + CoA = holo-[ACP] + adenosine 3',5'-bisphosphate + H(+). In terms of biological role, transfers the 4'-phosphopantetheine moiety from coenzyme A to a Ser of acyl-carrier-protein. The chain is Holo-[acyl-carrier-protein] synthase from Lachnoclostridium phytofermentans (strain ATCC 700394 / DSM 18823 / ISDg) (Clostridium phytofermentans).